The chain runs to 269 residues: Orotidine 5'-phosphate decarboxylase (269 aa).

Lysine 92 serves as the catalytic Proton donor.

It belongs to the OMP decarboxylase family. Type 2 subfamily.

It carries out the reaction orotidine 5'-phosphate + H(+) = UMP + CO2. Its pathway is pyrimidine metabolism; UMP biosynthesis via de novo pathway; UMP from orotate: step 2/2. In Natronomonas pharaonis (strain ATCC 35678 / DSM 2160 / CIP 103997 / JCM 8858 / NBRC 14720 / NCIMB 2260 / Gabara) (Halobacterium pharaonis), this protein is Orotidine 5'-phosphate decarboxylase.